The following is a 452-amino-acid chain: Protein CSN12 homolog (452 aa).

The PCI domain occupies 249–446; sequence VTFKYYEGVL…GFVVLSKSGA (198 aa).

It belongs to the CSN12 family.

The polypeptide is Protein CSN12 homolog (csn-8) (Neurospora crassa (strain ATCC 24698 / 74-OR23-1A / CBS 708.71 / DSM 1257 / FGSC 987)).